The chain runs to 425 residues: ADP-ribose glycohydrolase MACROD2 (425 aa).

In terms of domain architecture, Macro spans 59-240; the sequence is QETSQVKKSL…IYKKKMNEFF (182 aa). Residues 77 to 79, 90 to 92, and 97 to 102 contribute to the substrate site; these read GDI, AAN, and GGGGVD. Residue Lys-170 forms a Glycyl lysine isopeptide (Lys-Gly) (interchain with G-Cter in ubiquitin) linkage. Residues 185–191 and Phe-224 each bind substrate; that span reads ISTGIYG. Positions 243–425 are disordered; that stretch reads DDNNEEEEDV…EAKEQRNGTK (183 aa). The segment covering 244–262 has biased composition (acidic residues); that stretch reads DNNEEEEDVEMKEDSDENG. Residues 302 to 343 are compositionally biased toward basic and acidic residues; the sequence is EDFAKDENITKGGEVTDHSVRDQDHPDGQENDSTKNEIKIET. Polar residues predominate over residues 344-360; that stretch reads ESQSSYMETEELSSNQE. Composition is skewed to basic and acidic residues over residues 381–391 and 415–425; these read EGEKAPGEDTP and DEAKEQRNGTK.

The protein belongs to the MacroD-type family. MacroD1/2-like subfamily. Interacts with ADP-ribosylated PARP1.

The protein localises to the nucleus. It carries out the reaction 2''-O-acetyl-ADP-D-ribose + H2O = ADP-D-ribose + acetate + H(+). The catalysed reaction is 4-O-(ADP-D-ribosyl)-L-aspartyl-[protein] + H2O = L-aspartyl-[protein] + ADP-D-ribose + H(+). It catalyses the reaction 5-O-(ADP-D-ribosyl)-L-glutamyl-[protein] + H2O = L-glutamyl-[protein] + ADP-D-ribose + H(+). The enzyme catalyses alpha-NAD(+) + H2O = ADP-D-ribose + nicotinamide + H(+). Its activity is regulated as follows. Subject to product inhibition by ADP-ribose. In terms of biological role, removes ADP-ribose from aspartate and glutamate residues in proteins bearing a single ADP-ribose moiety. Inactive towards proteins bearing poly-ADP-ribose. Deacetylates O-acetyl-ADP ribose, a signaling molecule generated by the deacetylation of acetylated lysine residues in histones and other proteins. In Homo sapiens (Human), this protein is ADP-ribose glycohydrolase MACROD2.